We begin with the raw amino-acid sequence, 160 residues long: Phosphopantetheine adenylyltransferase (160 aa).

T10 is a binding site for substrate. ATP-binding positions include 10 to 11 and H18; that span reads TF. K42, L74, and R88 together coordinate substrate. Residues 89–91, E99, and 124–130 each bind ATP; these read GLR and NSFISST.

It belongs to the bacterial CoaD family. As to quaternary structure, homohexamer. It depends on Mg(2+) as a cofactor.

It localises to the cytoplasm. The catalysed reaction is (R)-4'-phosphopantetheine + ATP + H(+) = 3'-dephospho-CoA + diphosphate. The protein operates within cofactor biosynthesis; coenzyme A biosynthesis; CoA from (R)-pantothenate: step 4/5. In terms of biological role, reversibly transfers an adenylyl group from ATP to 4'-phosphopantetheine, yielding dephospho-CoA (dPCoA) and pyrophosphate. The chain is Phosphopantetheine adenylyltransferase from Aeromonas hydrophila subsp. hydrophila (strain ATCC 7966 / DSM 30187 / BCRC 13018 / CCUG 14551 / JCM 1027 / KCTC 2358 / NCIMB 9240 / NCTC 8049).